The chain runs to 486 residues: Membrane-bound lytic murein transglycosylase F (486 aa).

The signal sequence occupies residues 1–21; the sequence is MTRIKLSYFTIGLVALLLALA. The tract at residues 22 to 268 is non-LT domain; it reads LWPNIPWRNG…RLEEKYLGHV (247 aa). Residues 269 to 486 are LT domain; that stretch reads GSFDYVDTKT…VVGPGWSIGD (218 aa). Glu-313 is an active-site residue.

The protein in the N-terminal section; belongs to the bacterial solute-binding protein 3 family. In the C-terminal section; belongs to the transglycosylase Slt family.

The protein resides in the cell outer membrane. It carries out the reaction Exolytic cleavage of the (1-&gt;4)-beta-glycosidic linkage between N-acetylmuramic acid (MurNAc) and N-acetylglucosamine (GlcNAc) residues in peptidoglycan, from either the reducing or the non-reducing ends of the peptidoglycan chains, with concomitant formation of a 1,6-anhydrobond in the MurNAc residue.. Its function is as follows. Murein-degrading enzyme that degrades murein glycan strands and insoluble, high-molecular weight murein sacculi, with the concomitant formation of a 1,6-anhydromuramoyl product. Lytic transglycosylases (LTs) play an integral role in the metabolism of the peptidoglycan (PG) sacculus. Their lytic action creates space within the PG sacculus to allow for its expansion as well as for the insertion of various structures such as secretion systems and flagella. The polypeptide is Membrane-bound lytic murein transglycosylase F (Yersinia pestis bv. Antiqua (strain Antiqua)).